A 539-amino-acid polypeptide reads, in one-letter code: GMP synthase [glutamine-hydrolyzing] (539 aa).

Residues 4 to 203 enclose the Glutamine amidotransferase type-1 domain; the sequence is KILILDFGSQ…VHDICGCKSD (200 aa). The Nucleophile role is filled by Cys82. Residues His177 and Glu179 contribute to the active site. Residues 204–395 enclose the GMPS ATP-PPase domain; the sequence is WNMPDYIAEA…LGLPHDMVYR (192 aa). 231-237 contacts ATP; it reads SGGVDSS.

Homodimer.

It catalyses the reaction XMP + L-glutamine + ATP + H2O = GMP + L-glutamate + AMP + diphosphate + 2 H(+). It participates in purine metabolism; GMP biosynthesis; GMP from XMP (L-Gln route): step 1/1. Its function is as follows. Catalyzes the synthesis of GMP from XMP. The sequence is that of GMP synthase [glutamine-hydrolyzing] from Herminiimonas arsenicoxydans.